A 228-amino-acid polypeptide reads, in one-letter code: Cytidylate kinase (228 aa).

11-19 (GPAGTGKSS) is a binding site for ATP.

The protein belongs to the cytidylate kinase family. Type 1 subfamily.

It localises to the cytoplasm. The enzyme catalyses CMP + ATP = CDP + ADP. The catalysed reaction is dCMP + ATP = dCDP + ADP. This is Cytidylate kinase from Mycobacterium avium (strain 104).